Reading from the N-terminus, the 454-residue chain is Cobyrinate a,c-diamide synthase (454 aa).

In terms of domain architecture, GATase cobBQ-type spans 244–435 (KIAVAYDSAF…VHIHFLSNIA (192 aa)). Cys327 functions as the Nucleophile in the catalytic mechanism.

Belongs to the CobB/CbiA family. The cofactor is Mg(2+).

The enzyme catalyses cob(II)yrinate + 2 L-glutamine + 2 ATP + 2 H2O = cob(II)yrinate a,c diamide + 2 L-glutamate + 2 ADP + 2 phosphate + 2 H(+). It functions in the pathway cofactor biosynthesis; adenosylcobalamin biosynthesis; cob(II)yrinate a,c-diamide from sirohydrochlorin (anaerobic route): step 10/10. Its function is as follows. Catalyzes the ATP-dependent amidation of the two carboxylate groups at positions a and c of cobyrinate, using either L-glutamine or ammonia as the nitrogen source. The protein is Cobyrinate a,c-diamide synthase of Thermoplasma volcanium (strain ATCC 51530 / DSM 4299 / JCM 9571 / NBRC 15438 / GSS1).